The chain runs to 359 residues: MTSTLFFKPRPSSTLAEIAALTKAELVDPSQGDRVISGIASLDEAGPMHLGFFENIKYVAELEQTHAGACLVTQRYETRVPPHVAVLRVKSPVQAFVAYARHIHEDAMRPMSGFGGTGIAPSAVIHPSARLEDGVIVDPLAVIGPDVEIGAGSVIGAGAVIASGVKIGRDCNVGANTTIQFSLIGNNVLIHPGCHIGQDGFRFIFARTHQKVPQVGRVIIQNDVEIGSGTTVDRGGLRDTVIGEGTKIDNQVQVGHNVTIGRHCVIAAQCGLAGSLTLGDNVALGAKVGINNHVMIGDGAQITAMSAVKDSVPAGERWGGYFAKPTKQWFREIIAVERLMRGGAGAAPKADDGKDEDRG.

The active-site Proton acceptor is His-256.

The protein belongs to the transferase hexapeptide repeat family. LpxD subfamily. As to quaternary structure, homotrimer.

It catalyses the reaction a UDP-3-O-[(3R)-3-hydroxyacyl]-alpha-D-glucosamine + a (3R)-hydroxyacyl-[ACP] = a UDP-2-N,3-O-bis[(3R)-3-hydroxyacyl]-alpha-D-glucosamine + holo-[ACP] + H(+). It functions in the pathway bacterial outer membrane biogenesis; LPS lipid A biosynthesis. Catalyzes the N-acylation of UDP-3-O-acylglucosamine using 3-hydroxyacyl-ACP as the acyl donor. Is involved in the biosynthesis of lipid A, a phosphorylated glycolipid that anchors the lipopolysaccharide to the outer membrane of the cell. The sequence is that of UDP-3-O-acylglucosamine N-acyltransferase from Rhodopseudomonas palustris (strain HaA2).